Consider the following 885-residue polypeptide: Protein PTHB1 (885 aa).

The interval 1–406 (MSLFKARDWW…LQGVWPLTEQ (406 aa)) is seven-bladed beta-propeller. An interaction with LZTL1 region spans residues 684–764 (RDKTPAPLQH…FLPLQEDTQE (81 aa)).

In terms of assembly, part of BBSome complex, that contains BBS1, BBS2, BBS4, BBS5, BBS7, BBS8/TTC8, BBS9 and BBIP10. Interacts with LZTL1; the interaction mediates the association of LZTL1 with the BBsome complex and regulates BBSome ciliary trafficking.

The protein resides in the cell projection. Its subcellular location is the cilium membrane. It localises to the cytoplasm. The protein localises to the cytoskeleton. It is found in the microtubule organizing center. The protein resides in the centrosome. Its subcellular location is the centriolar satellite. Its function is as follows. The BBSome complex is thought to function as a coat complex required for sorting of specific membrane proteins to the primary cilia. The BBSome complex is required for ciliogenesis but is dispensable for centriolar satellite function. This ciliogenic function is mediated in part by the Rab8 GDP/GTP exchange factor, which localizes to the basal body and contacts the BBSome. Rab8(GTP) enters the primary cilium and promotes extension of the ciliary membrane. Firstly the BBSome associates with the ciliary membrane and binds to RAB3IP/Rabin8, the guanosyl exchange factor (GEF) for Rab8 and then the Rab8-GTP localizes to the cilium and promotes docking and fusion of carrier vesicles to the base of the ciliary membrane. Required for proper BBSome complex assembly and its ciliary localization. The chain is Protein PTHB1 (Bbs9) from Mus musculus (Mouse).